We begin with the raw amino-acid sequence, 115 residues long: MFDKIKNFSEILSNMGSFREKMEEVKKRIASIRVVGDAGAGMVTVTASGEGQITNVFINKQLFDADDNKMLEDLVMAATNDALKKAKEATAYEFQSASGGLDFSEISKMFGGKFG.

The protein belongs to the YbaB/EbfC family. Homodimer.

The protein localises to the cytoplasm. The protein resides in the nucleoid. Binds to DNA and alters its conformation. May be involved in regulation of gene expression, nucleoid organization and DNA protection. The protein is Nucleoid-associated protein LA_4332 of Leptospira interrogans serogroup Icterohaemorrhagiae serovar Lai (strain 56601).